The primary structure comprises 344 residues: Phosphate acyltransferase (344 aa).

The protein belongs to the PlsX family. Homodimer. Probably interacts with PlsY.

The protein localises to the cytoplasm. The enzyme catalyses a fatty acyl-[ACP] + phosphate = an acyl phosphate + holo-[ACP]. It participates in lipid metabolism; phospholipid metabolism. In terms of biological role, catalyzes the reversible formation of acyl-phosphate (acyl-PO(4)) from acyl-[acyl-carrier-protein] (acyl-ACP). This enzyme utilizes acyl-ACP as fatty acyl donor, but not acyl-CoA. The sequence is that of Phosphate acyltransferase from Thermosynechococcus vestitus (strain NIES-2133 / IAM M-273 / BP-1).